The sequence spans 150 residues: Large ribosomal subunit protein bL9 (150 aa).

Belongs to the bacterial ribosomal protein bL9 family.

Functionally, binds to the 23S rRNA. The polypeptide is Large ribosomal subunit protein bL9 (Lactococcus lactis subsp. cremoris (strain SK11)).